The primary structure comprises 232 residues: Ribonuclease 3 (232 aa).

The RNase III domain occupies 10 to 135 (ALKIYEATGY…LIGAMYMDGG (126 aa)). Residue glutamate 48 coordinates Mg(2+). Residue aspartate 52 is part of the active site. Mg(2+)-binding residues include asparagine 121 and glutamate 124. Glutamate 124 is an active-site residue. Residues 161–230 (DPKTALQEWV…AKLMLKKITE (70 aa)) enclose the DRBM domain.

The protein belongs to the ribonuclease III family. In terms of assembly, homodimer. Mg(2+) is required as a cofactor.

The protein resides in the cytoplasm. It catalyses the reaction Endonucleolytic cleavage to 5'-phosphomonoester.. Digests double-stranded RNA. Involved in the processing of primary rRNA transcript to yield the immediate precursors to the large and small rRNAs (23S and 16S). Processes some mRNAs, and tRNAs when they are encoded in the rRNA operon. Processes pre-crRNA and tracrRNA of type II CRISPR loci if present in the organism. The chain is Ribonuclease 3 from Anaplasma marginale (strain Florida).